The sequence spans 138 residues: Actophorin (138 aa).

Serine 2 is modified (blocked amino end (Ser)). One can recognise an ADF-H domain in the interval 3 to 134 (GIAVSDDCVQ…SEDAVSERAK (132 aa)).

The protein belongs to the actin-binding proteins ADF family. In terms of assembly, monomer.

The protein localises to the cytoplasm. Its function is as follows. Forms a one to one complex with monomeric actin. Can regulate the pool available for polymerization. Severs actin filaments in a dose-dependent manner. The protein is Actophorin of Acanthamoeba castellanii (Amoeba).